We begin with the raw amino-acid sequence, 158 residues long: Small ribosomal subunit protein uS9 (158 aa).

Residues 1–20 (MTEAVETETVEPTTDEATAA) are disordered. Over residues 10–20 (VEPTTDEATAA) the composition is skewed to low complexity.

It belongs to the universal ribosomal protein uS9 family.

This Mycobacterium sp. (strain JLS) protein is Small ribosomal subunit protein uS9.